Consider the following 749-residue polypeptide: EF-hand domain-containing family member C2 (749 aa).

DM10 domains follow at residues 75–182 (DKQV…RKIG), 226–368 (HGKI…KSKY), and 431–538 (KSNI…EQNT). The EF-hand domain occupies 558–593 (GKSRELKQVFKAADSKHTNMVDYNTFRDILMSLTVG).

As to quaternary structure, microtubule inner protein component of sperm flagellar doublet microtubules. In terms of tissue distribution, expressed in airway epithelial cells.

Its subcellular location is the cytoplasm. The protein resides in the cytoskeleton. The protein localises to the cilium axoneme. It localises to the flagellum axoneme. In terms of biological role, microtubule inner protein (MIP) part of the dynein-decorated doublet microtubules (DMTs) in cilia axoneme, which is required for motile cilia beating. The polypeptide is EF-hand domain-containing family member C2 (Homo sapiens (Human)).